The primary structure comprises 620 residues: MAU2 chromatid cohesion factor homolog (620 aa).

TPR repeat units lie at residues 452 to 485 (GGFY…ANAE) and 492 to 525 (SCSL…ASKI).

The protein belongs to the SCC4/mau-2 family. Interacts with Nipped-B to form the cohesin loading complex.

The protein localises to the nucleus. It localises to the nucleoplasm. In terms of biological role, required for association of the cohesin complex with chromatin during interphase. Plays a role in sister chromatid cohesion and normal progression through prometaphase. The polypeptide is MAU2 chromatid cohesion factor homolog (Drosophila persimilis (Fruit fly)).